The chain runs to 319 residues: MTIILTDPVCPVCEFPSNVELHFGGLVCGACAAFFRRTVSLNIRYLCEKKNQCKGKRKNCRACRFDYCVKIAGMKRNLVRQRKNSTNTPMYILNRRKDSGNEEVVRGFVTSTQSKWAQHSRKSSMSPNKEAEKDVSKILKISHGRLLKYYIYQITQGKWVNMNTLNIKSVEEFLEITSIHNKLAAEICKTCPGVDLLDNEDILTIRKYFQFSNVWIESAWNYLMSADKHVQIDDSELDLTLLKFINQVKSTLLVSLSQLKFNTIEFAAFKSICIWKLVYHGTSRAMKIIAQEHYEGVAKALNDYYQTYTSMKKSRYLQF.

The segment at residues 7 to 81 is a DNA-binding region (nuclear receptor); that stretch reads DPVCPVCEFP…AGMKRNLVRQ (75 aa). NR C4-type zinc fingers lie at residues 10 to 31 and 47 to 63; these read CPVC…CGAC and CEKK…CRAC. The region spanning 130-319 is the NR LBD domain; that stretch reads EAEKDVSKIL…SMKKSRYLQF (190 aa).

It belongs to the nuclear hormone receptor family.

Its subcellular location is the nucleus. Orphan nuclear receptor. This chain is Nuclear hormone receptor family member nhr-174 (nhr-174), found in Caenorhabditis elegans.